Reading from the N-terminus, the 337-residue chain is Probable dual-specificity RNA methyltransferase RlmN (337 aa).

The active-site Proton acceptor is the E88. In terms of domain architecture, Radical SAM core spans 94-324; that stretch reads SEKRLTVCVS…VRYSRGLATD (231 aa). C101 and C327 form a disulfide bridge. Positions 108, 112, and 115 each coordinate [4Fe-4S] cluster. S-adenosyl-L-methionine-binding positions include 155 to 156, S185, 208 to 210, and N284; these read GE and SLH. Residue C327 is the S-methylcysteine intermediate of the active site.

Belongs to the radical SAM superfamily. RlmN family. Requires [4Fe-4S] cluster as cofactor.

Its subcellular location is the cytoplasm. It carries out the reaction adenosine(2503) in 23S rRNA + 2 reduced [2Fe-2S]-[ferredoxin] + 2 S-adenosyl-L-methionine = 2-methyladenosine(2503) in 23S rRNA + 5'-deoxyadenosine + L-methionine + 2 oxidized [2Fe-2S]-[ferredoxin] + S-adenosyl-L-homocysteine. It catalyses the reaction adenosine(37) in tRNA + 2 reduced [2Fe-2S]-[ferredoxin] + 2 S-adenosyl-L-methionine = 2-methyladenosine(37) in tRNA + 5'-deoxyadenosine + L-methionine + 2 oxidized [2Fe-2S]-[ferredoxin] + S-adenosyl-L-homocysteine. Its function is as follows. Specifically methylates position 2 of adenine 2503 in 23S rRNA and position 2 of adenine 37 in tRNAs. This chain is Probable dual-specificity RNA methyltransferase RlmN, found in Microcystis aeruginosa (strain NIES-843 / IAM M-2473).